The primary structure comprises 853 residues: DNA mismatch repair protein MutS (853 aa).

Residue 614 to 621 participates in ATP binding; that stretch reads GPNMGGKS.

The protein belongs to the DNA mismatch repair MutS family.

In terms of biological role, this protein is involved in the repair of mismatches in DNA. It is possible that it carries out the mismatch recognition step. This protein has a weak ATPase activity. This is DNA mismatch repair protein MutS from Escherichia coli (strain SE11).